Reading from the N-terminus, the 313-residue chain is Ribonuclease HIII (313 aa).

An RNase H type-2 domain is found at 94–310 (MSVIGSDEVG…TQKAKRLVER (217 aa)). Positions 100, 101, and 205 each coordinate a divalent metal cation.

The protein belongs to the RNase HII family. RnhC subfamily. The cofactor is Mn(2+). Mg(2+) serves as cofactor.

The protein resides in the cytoplasm. The enzyme catalyses Endonucleolytic cleavage to 5'-phosphomonoester.. Functionally, endonuclease that specifically degrades the RNA of RNA-DNA hybrids. This chain is Ribonuclease HIII, found in Bacillus velezensis (strain DSM 23117 / BGSC 10A6 / LMG 26770 / FZB42) (Bacillus amyloliquefaciens subsp. plantarum).